We begin with the raw amino-acid sequence, 115 residues long: Large ribosomal subunit protein bL19 (115 aa).

The protein belongs to the bacterial ribosomal protein bL19 family.

Its function is as follows. This protein is located at the 30S-50S ribosomal subunit interface and may play a role in the structure and function of the aminoacyl-tRNA binding site. The chain is Large ribosomal subunit protein bL19 from Clostridium perfringens (strain ATCC 13124 / DSM 756 / JCM 1290 / NCIMB 6125 / NCTC 8237 / Type A).